Consider the following 804-residue polypeptide: Probable replication endonuclease from prophage-like region (804 aa).

Residues Tyr-498 and Tyr-502 each act as O-(5'-phospho-DNA)-tyrosine intermediate in the active site.

Belongs to the phage GPA family.

Its function is as follows. Possible endonuclease which induces a single-strand cut and initiates DNA replication. The sequence is that of Probable replication endonuclease from prophage-like region from Escherichia coli O6:H1 (strain CFT073 / ATCC 700928 / UPEC).